The sequence spans 289 residues: uncharacterized protein (289 aa).

The first 23 residues, 1–23, serve as a signal peptide directing secretion; sequence MIKNYKLLLFTTFTLFFITFVSG. Residues asparagine 74, asparagine 101, asparagine 132, and asparagine 285 are each glycosylated (N-linked (GlcNAc...) asparagine).

Its subcellular location is the secreted. This is an uncharacterized protein from Dictyostelium discoideum (Social amoeba).